Reading from the N-terminus, the 497-residue chain is Xylooligosaccharide oxidase (497 aa).

The signal sequence occupies residues 1-16 (MHLLPLTVSATAVVSA). Cys-30 and Cys-79 form a disulfide bridge. N-linked (GlcNAc...) asparagine glycans are attached at residues Asn-42 and Asn-117. Residues 57-230 (LPYTPAAIAK…ASFRFKTFAA (174 aa)) enclose the FAD-binding PCMH-type domain. Residues 94–155 (HSYASFGLGG…GKRAFSHGTC (62 aa)) constitute a cross-link (6-(S-cysteinyl)-8alpha-(pros-histidyl)-FAD (His-Cys)). Thr-154 contributes to the substrate binding site. N-linked (GlcNAc...) asparagine glycans are attached at residues Asn-192, Asn-233, and Asn-245. Arg-272 is a substrate binding site. 2 N-linked (GlcNAc...) asparagine glycosylation sites follow: Asn-289 and Asn-307. Residues Glu-412 and Tyr-451 each contribute to the substrate site.

It belongs to the oxygen-dependent FAD-linked oxidoreductase family. FAD serves as cofactor. In terms of processing, the FAD cofactor is bound via a bicovalent 6-S-cysteinyl, 8alpha-N1-histidyl FAD linkage.

It is found in the secreted. The enzyme catalyses D-xylobiose + O2 = D-xylobiono-1,5-lactone + H2O2. It carries out the reaction D-xylotriose + O2 = D-xylotriono-1,5-lactone + H2O2. The catalysed reaction is D-xylotetraose + O2 = D-xylotetraono-1,5-lactone + H2O2. In terms of biological role, catalyzes the selective oxidation of C1 hydroxyl moieties on mono-, oligo- and polysaccharides with concomitant reduction of molecular oxygen to hydrogen peroxide. This results in the formation of the corresponding lactones, which typically undergo spontaneous hydrolysis. Xylooligosaccharide oxidase is able to oxidize a variety of substrates including D-xylose, D-cellobiose, lactose and arabinose. The enzyme acts primarily on xylooligosaccharides, indicating that it prefers pentose-based oligosaccharides over hexose-based oligosaccharides. In Thermothelomyces thermophilus (strain ATCC 42464 / BCRC 31852 / DSM 1799) (Sporotrichum thermophile), this protein is Xylooligosaccharide oxidase.